Consider the following 337-residue polypeptide: Glycerol-3-phosphate dehydrogenase [NAD(P)+] 2 (337 aa).

NADPH is bound by residues threonine 11, tryptophan 12, and lysine 105. Sn-glycerol 3-phosphate contacts are provided by lysine 105, glycine 139, and threonine 141. Residue alanine 143 coordinates NADPH. Positions 194, 247, 257, 258, and 259 each coordinate sn-glycerol 3-phosphate. The active-site Proton acceptor is the lysine 194. Residue arginine 258 coordinates NADPH. NADPH-binding residues include valine 282 and glutamate 284.

The protein belongs to the NAD-dependent glycerol-3-phosphate dehydrogenase family.

It is found in the cytoplasm. The enzyme catalyses sn-glycerol 3-phosphate + NAD(+) = dihydroxyacetone phosphate + NADH + H(+). The catalysed reaction is sn-glycerol 3-phosphate + NADP(+) = dihydroxyacetone phosphate + NADPH + H(+). Its pathway is membrane lipid metabolism; glycerophospholipid metabolism. Functionally, catalyzes the reduction of the glycolytic intermediate dihydroxyacetone phosphate (DHAP) to sn-glycerol 3-phosphate (G3P), the key precursor for phospholipid synthesis. This is Glycerol-3-phosphate dehydrogenase [NAD(P)+] 2 from Lactobacillus delbrueckii subsp. bulgaricus (strain ATCC 11842 / DSM 20081 / BCRC 10696 / JCM 1002 / NBRC 13953 / NCIMB 11778 / NCTC 12712 / WDCM 00102 / Lb 14).